The sequence spans 134 residues: B3 domain-containing protein At1g16640 (134 aa).

The segment at residues 7–100 (VQFMKPFISE…TFYVIIYGHN (94 aa)) is a DNA-binding region (TF-B3).

The protein resides in the nucleus. This chain is B3 domain-containing protein At1g16640, found in Arabidopsis thaliana (Mouse-ear cress).